We begin with the raw amino-acid sequence, 386 residues long: Cytochrome b (386 aa).

4 helical membrane-spanning segments follow: residues 32–52 (FGSL…TLAM), 76–98 (WLIR…LHVG), 113–133 (TWII…LGYV), and 179–199 (FFAL…MHLI). 2 residues coordinate heme b: His-82 and His-96. 2 residues coordinate heme b: His-183 and His-197. His-202 serves as a coordination point for a ubiquinone. 4 helical membrane-spanning segments follow: residues 226–246 (YIFK…LFVF), 290–310 (LLGV…PITD), 322–342 (LSKV…QLGA), and 349–369 (FIEF…VIMP).

This sequence belongs to the cytochrome b family. In terms of assembly, fungal cytochrome b-c1 complex contains 10 subunits; 3 respiratory subunits, 2 core proteins and 5 low-molecular weight proteins. Cytochrome b-c1 complex is a homodimer. Requires heme b as cofactor.

Its subcellular location is the mitochondrion inner membrane. Functionally, component of the ubiquinol-cytochrome c reductase complex (complex III or cytochrome b-c1 complex) that is part of the mitochondrial respiratory chain. The b-c1 complex mediates electron transfer from ubiquinol to cytochrome c. Contributes to the generation of a proton gradient across the mitochondrial membrane that is then used for ATP synthesis. The polypeptide is Cytochrome b (cob) (Talaromyces marneffei (Penicillium marneffei)).